Consider the following 231-residue polypeptide: Eukaryotic translation initiation factor 4E-1 (231 aa).

2 EIF4G-binding regions span residues 56-59 and 66-102; these read HPLE and FDNSTTKSRQTAWGSSLRNLYTFSTVEDFWGAYNNIH. Residues 74-79, K106, and 124-125 each bind mRNA; these read RQTAWG and WE. C129 and C167 are disulfide-bonded. Positions 150–159 are EIF4G-binding; sequence YTLLAMIGHQ. MRNA-binding positions include 174 to 179 and 219 to 223; these read RAKGEK and KRLDR.

Belongs to the eukaryotic initiation factor 4E family. As to quaternary structure, EIF4F is a multi-subunit complex, the composition of which varies with external and internal environmental conditions. It is composed of at least EIF4A, EIF4E and EIF4G. EIF4E is also known to interact with other partners. In higher plants two isoforms of EIF4F have been identified, named isoform EIF4F and isoform EIF(iso)4F. Isoform EIF4F has subunits p220 and p26, whereas isoform EIF(iso)4F has subunits p82 and p28. In terms of assembly, (Microbial infection) Interacts with potyvirus viral genome-linked protein (VPg); this interaction is possible in susceptible hosts but impaired in resistant plants. According to the redox status, the Cys-129-Cys-167 disulfide bridge may have a role in regulating protein function by affecting its ability to bind capped mRNA.

It localises to the nucleus. The protein resides in the cytoplasm. Its function is as follows. Component of the protein complex eIF4F, which is involved in the recognition of the mRNA cap, ATP-dependent unwinding of 5'-terminal secondary structure and recruitment of mRNA to the ribosome. Recognizes and binds the 7-methylguanosine-containing mRNA cap during an early step in the initiation of protein synthesis and facilitates ribosome binding by inducing the unwinding of the mRNAs secondary structures. Key component of recessive resistance to potyviruses. (Microbial infection) Susceptibility host factor required for viral infection (e.g. pepper mottle virus (PepMoV), potato virus Y (PVY) and tobacco etch virus (TEV)) by recruiting viral RNAs to the host ribosomal complex via an interaction with viral genome-linked protein (VPg). This Solanum habrochaites (Wild tomato) protein is Eukaryotic translation initiation factor 4E-1.